The primary structure comprises 643 residues: Sigma-like sequence protein 1, mitochondrial (643 aa).

The segment at 43 to 72 (TQSGLVKNDQKQPRHRPSKKRSHKETGDNN) is disordered. A compositionally biased stretch (basic residues) spans 55–65 (PRHRPSKKRSH).

This sequence belongs to the SLS1 family.

The protein localises to the mitochondrion inner membrane. Functionally, involved in aerobic respiration where it is required for assembly of respiratory chain enzyme complexes III and IV. Also has a role in mitochondrial gene expression. May be part of a mitochondrial membrane-associated RNA-shuttling system, delivering NAM1-associated transcripts to the translation machinery. The sequence is that of Sigma-like sequence protein 1, mitochondrial (SLS1) from Saccharomyces cerevisiae (strain ATCC 204508 / S288c) (Baker's yeast).